A 585-amino-acid chain; its full sequence is Archaeosine synthase (585 aa).

In terms of domain architecture, PUA spans T516–E584.

Belongs to the archaeosine synthase type 1 family. As to quaternary structure, homodimer.

It catalyses the reaction 7-cyano-7-carbaguanosine(15) in tRNA + L-glutamine + H2O = archaeosine(15) in tRNA + L-glutamate. The protein operates within tRNA modification; archaeosine-tRNA biosynthesis. Functionally, is responsible for the final step in the biosynthesis of archaeosine, a modified nucleoside present in the dihydrouridine loop (D-loop) of archaeal tRNA. Catalyzes the conversion of 7-cyano-7-deazaguanine (preQ0)-modified tRNA to archaeosine-tRNA, transforming a nitrile group to a formamidine group. This Haloferax volcanii (strain ATCC 29605 / DSM 3757 / JCM 8879 / NBRC 14742 / NCIMB 2012 / VKM B-1768 / DS2) (Halobacterium volcanii) protein is Archaeosine synthase.